A 185-amino-acid polypeptide reads, in one-letter code: Ribosome-recycling factor (185 aa).

Belongs to the RRF family.

It localises to the cytoplasm. Responsible for the release of ribosomes from messenger RNA at the termination of protein biosynthesis. May increase the efficiency of translation by recycling ribosomes from one round of translation to another. The polypeptide is Ribosome-recycling factor (Aliarcobacter butzleri (strain RM4018) (Arcobacter butzleri)).